We begin with the raw amino-acid sequence, 174 residues long: Transgelin (174 aa).

The Calponin-homology (CH) domain occupies 3–109; that stretch reads SQLEKEAREW…SIHSFSRYAA (107 aa).

In terms of assembly, binds to actin.

It is found in the cytoplasm. Functionally, has actin-binding and actin-bundling activity and is a component of the actin patch. Stabilizes actin filaments against disassembly. Cross-links F-actin and is required for the formation of the contractile F-actin ring. This is Transgelin (stg1) from Schizosaccharomyces pombe (strain 972 / ATCC 24843) (Fission yeast).